A 942-amino-acid chain; its full sequence is Sucrose synthase 6 (942 aa).

Residues 281–759 (TVFNVVIFSV…GLKRIYECYT (479 aa)) are GT-B glycosyltransferase. Positions 830 to 862 (TTNLGAGSKQKEVTETEKTKQKSKDGQEQHDVK) are disordered. Basic and acidic residues predominate over residues 838-862 (KQKEVTETEKTKQKSKDGQEQHDVK).

The protein belongs to the glycosyltransferase 1 family. Plant sucrose synthase subfamily. In terms of tissue distribution, detected in the whole plant but more precisely confined to the vasculature in cotyledons, leaves, petals, anthers and roots.

Its subcellular location is the secreted. It localises to the cell wall. The enzyme catalyses an NDP-alpha-D-glucose + D-fructose = a ribonucleoside 5'-diphosphate + sucrose + H(+). In terms of biological role, sucrose-cleaving enzyme that provides UDP-glucose and fructose for various metabolic pathways. Functions in callose synthesis at the site of phloem sieve elements. This is Sucrose synthase 6 (SUS6) from Arabidopsis thaliana (Mouse-ear cress).